The primary structure comprises 98 residues: DNA-binding protein Fis (98 aa).

The segment at residues 74 to 93 (QTRAALMMGINRGTLRKKLK) is a DNA-binding region (H-T-H motif).

It belongs to the transcriptional regulatory Fis family. In terms of assembly, homodimer.

In terms of biological role, activates ribosomal RNA transcription. Plays a direct role in upstream activation of rRNA promoters. The sequence is that of DNA-binding protein Fis from Photorhabdus laumondii subsp. laumondii (strain DSM 15139 / CIP 105565 / TT01) (Photorhabdus luminescens subsp. laumondii).